Reading from the N-terminus, the 200-residue chain is Putative AgrB-like protein (200 aa).

A run of 5 helical transmembrane segments spans residues 49 to 69, 88 to 108, 114 to 134, 148 to 168, and 171 to 191; these read LIIT…LVFM, LLCT…IQFT, LFRF…SPAV, ALKH…FLVS, and LGTI…PLKG.

This sequence belongs to the AgrB family.

The protein resides in the cell membrane. May be involved in the proteolytic processing of a quorum sensing system signal molecule precursor. This chain is Putative AgrB-like protein, found in Lactiplantibacillus plantarum (strain ATCC BAA-793 / NCIMB 8826 / WCFS1) (Lactobacillus plantarum).